Reading from the N-terminus, the 365-residue chain is Formamidopyrimidine-DNA glycosylase (365 aa).

Proline 2 serves as the catalytic Schiff-base intermediate with DNA. Glutamate 3 serves as the catalytic Proton donor. The active-site Proton donor; for beta-elimination activity is lysine 61. Residues 121–150 (RGRLAGHGDGMDGTSRTGSTLPGTGGTENS) form a disordered region. Residues 134–150 (TSRTGSTLPGTGGTENS) are compositionally biased toward polar residues. 3 residues coordinate DNA: histidine 186, arginine 205, and arginine 246. The FPG-type zinc finger occupies 331 to 365 (RVYGRGGQPCRHCGTTLATAQVAGRTTVFCPQCQR). Arginine 355 functions as the Proton donor; for delta-elimination activity in the catalytic mechanism.

This sequence belongs to the FPG family. As to quaternary structure, monomer. The cofactor is Zn(2+).

It carries out the reaction Hydrolysis of DNA containing ring-opened 7-methylguanine residues, releasing 2,6-diamino-4-hydroxy-5-(N-methyl)formamidopyrimidine.. The catalysed reaction is 2'-deoxyribonucleotide-(2'-deoxyribose 5'-phosphate)-2'-deoxyribonucleotide-DNA = a 3'-end 2'-deoxyribonucleotide-(2,3-dehydro-2,3-deoxyribose 5'-phosphate)-DNA + a 5'-end 5'-phospho-2'-deoxyribonucleoside-DNA + H(+). Functionally, involved in base excision repair of DNA damaged by oxidation or by mutagenic agents. Acts as a DNA glycosylase that recognizes and removes damaged bases. Has a preference for oxidized purines, such as 7,8-dihydro-8-oxoguanine (8-oxoG). Has AP (apurinic/apyrimidinic) lyase activity and introduces nicks in the DNA strand. Cleaves the DNA backbone by beta-delta elimination to generate a single-strand break at the site of the removed base with both 3'- and 5'-phosphates. The chain is Formamidopyrimidine-DNA glycosylase from Nitratidesulfovibrio vulgaris (strain ATCC 29579 / DSM 644 / CCUG 34227 / NCIMB 8303 / VKM B-1760 / Hildenborough) (Desulfovibrio vulgaris).